A 199-amino-acid polypeptide reads, in one-letter code: dITP/XTP pyrophosphatase (199 aa).

Serine 8–lysine 13 is a substrate binding site. Residue aspartate 69 is the Proton acceptor of the active site. Aspartate 69 serves as a coordination point for Mg(2+). Substrate-binding positions include serine 70, phenylalanine 154 to asparagine 157, lysine 177, and histidine 182 to arginine 183.

Belongs to the HAM1 NTPase family. In terms of assembly, homodimer. Mg(2+) is required as a cofactor.

The catalysed reaction is XTP + H2O = XMP + diphosphate + H(+). It carries out the reaction dITP + H2O = dIMP + diphosphate + H(+). It catalyses the reaction ITP + H2O = IMP + diphosphate + H(+). Its function is as follows. Pyrophosphatase that catalyzes the hydrolysis of nucleoside triphosphates to their monophosphate derivatives, with a high preference for the non-canonical purine nucleotides XTP (xanthosine triphosphate), dITP (deoxyinosine triphosphate) and ITP. Seems to function as a house-cleaning enzyme that removes non-canonical purine nucleotides from the nucleotide pool, thus preventing their incorporation into DNA/RNA and avoiding chromosomal lesions. This is dITP/XTP pyrophosphatase from Xylella fastidiosa (strain 9a5c).